The primary structure comprises 120 residues: NAD(P)H-quinone oxidoreductase subunit 3, chloroplastic (120 aa).

The next 3 membrane-spanning stretches (helical) occupy residues 9 to 29 (IFWA…LISG), 64 to 84 (MFAL…PWAM), and 88 to 108 (VLGV…IVGS).

This sequence belongs to the complex I subunit 3 family. In terms of assembly, NDH is composed of at least 16 different subunits, 5 of which are encoded in the nucleus.

It localises to the plastid. The protein localises to the chloroplast thylakoid membrane. It carries out the reaction a plastoquinone + NADH + (n+1) H(+)(in) = a plastoquinol + NAD(+) + n H(+)(out). The enzyme catalyses a plastoquinone + NADPH + (n+1) H(+)(in) = a plastoquinol + NADP(+) + n H(+)(out). Functionally, NDH shuttles electrons from NAD(P)H:plastoquinone, via FMN and iron-sulfur (Fe-S) centers, to quinones in the photosynthetic chain and possibly in a chloroplast respiratory chain. The immediate electron acceptor for the enzyme in this species is believed to be plastoquinone. Couples the redox reaction to proton translocation, and thus conserves the redox energy in a proton gradient. The polypeptide is NAD(P)H-quinone oxidoreductase subunit 3, chloroplastic (Amborella trichopoda).